The primary structure comprises 84 residues: GTP cyclohydrolase 1 feedback regulatory protein (84 aa).

This sequence belongs to the GFRP family. Homopentamer. Forms a complex with GCH1 where a GCH1 homodecamer is sandwiched by two GFRP homopentamers.

It is found in the nucleus. The protein localises to the nucleus membrane. It localises to the cytoplasm. The protein resides in the cytosol. Its function is as follows. Mediates tetrahydrobiopterin inhibition of GTP cyclohydrolase 1. This chain is GTP cyclohydrolase 1 feedback regulatory protein (gchfr), found in Xenopus tropicalis (Western clawed frog).